A 294-amino-acid polypeptide reads, in one-letter code: Phosphatidylserine decarboxylase proenzyme (294 aa).

Catalysis depends on charge relay system; for autoendoproteolytic cleavage activity residues D88, H145, and S248. S248 serves as the catalytic Schiff-base intermediate with substrate; via pyruvic acid; for decarboxylase activity. S248 bears the Pyruvic acid (Ser); by autocatalysis mark.

The protein belongs to the phosphatidylserine decarboxylase family. PSD-B subfamily. Prokaryotic type I sub-subfamily. As to quaternary structure, heterodimer of a large membrane-associated beta subunit and a small pyruvoyl-containing alpha subunit. Pyruvate is required as a cofactor. Is synthesized initially as an inactive proenzyme. Formation of the active enzyme involves a self-maturation process in which the active site pyruvoyl group is generated from an internal serine residue via an autocatalytic post-translational modification. Two non-identical subunits are generated from the proenzyme in this reaction, and the pyruvate is formed at the N-terminus of the alpha chain, which is derived from the carboxyl end of the proenzyme. The autoendoproteolytic cleavage occurs by a canonical serine protease mechanism, in which the side chain hydroxyl group of the serine supplies its oxygen atom to form the C-terminus of the beta chain, while the remainder of the serine residue undergoes an oxidative deamination to produce ammonia and the pyruvoyl prosthetic group on the alpha chain. During this reaction, the Ser that is part of the protease active site of the proenzyme becomes the pyruvoyl prosthetic group, which constitutes an essential element of the active site of the mature decarboxylase.

It localises to the cell membrane. The enzyme catalyses a 1,2-diacyl-sn-glycero-3-phospho-L-serine + H(+) = a 1,2-diacyl-sn-glycero-3-phosphoethanolamine + CO2. It participates in phospholipid metabolism; phosphatidylethanolamine biosynthesis; phosphatidylethanolamine from CDP-diacylglycerol: step 2/2. Functionally, catalyzes the formation of phosphatidylethanolamine (PtdEtn) from phosphatidylserine (PtdSer). This chain is Phosphatidylserine decarboxylase proenzyme, found in Herminiimonas arsenicoxydans.